The sequence spans 331 residues: Porphobilinogen deaminase (331 aa).

At Cys-248 the chain carries S-(dipyrrolylmethanemethyl)cysteine. A disordered region spans residues 307–331 (QLLQAPKQTGEPHDPDRHDKGTGRP). A compositionally biased stretch (basic and acidic residues) spans 316-331 (GEPHDPDRHDKGTGRP).

This sequence belongs to the HMBS family. In terms of assembly, monomer. It depends on dipyrromethane as a cofactor.

It carries out the reaction 4 porphobilinogen + H2O = hydroxymethylbilane + 4 NH4(+). Its pathway is porphyrin-containing compound metabolism; protoporphyrin-IX biosynthesis; coproporphyrinogen-III from 5-aminolevulinate: step 2/4. In terms of biological role, tetrapolymerization of the monopyrrole PBG into the hydroxymethylbilane pre-uroporphyrinogen in several discrete steps. The sequence is that of Porphobilinogen deaminase from Acidothermus cellulolyticus (strain ATCC 43068 / DSM 8971 / 11B).